The sequence spans 699 residues: Elongation factor G (699 aa).

In terms of domain architecture, tr-type G spans 8–283; that stretch reads EHIRNIGICA…AVVDFLPSPI (276 aa). Residues 17–24, 81–85, and 135–138 contribute to the GTP site; these read AHIDAGKT, DTPGH, and NKMD.

The protein belongs to the TRAFAC class translation factor GTPase superfamily. Classic translation factor GTPase family. EF-G/EF-2 subfamily.

Its subcellular location is the cytoplasm. Functionally, catalyzes the GTP-dependent ribosomal translocation step during translation elongation. During this step, the ribosome changes from the pre-translocational (PRE) to the post-translocational (POST) state as the newly formed A-site-bound peptidyl-tRNA and P-site-bound deacylated tRNA move to the P and E sites, respectively. Catalyzes the coordinated movement of the two tRNA molecules, the mRNA and conformational changes in the ribosome. This chain is Elongation factor G, found in Rickettsia rickettsii (strain Iowa).